The following is a 383-amino-acid chain: S-adenosylmethionine synthase (383 aa).

Histidine 15 contributes to the ATP binding site. Aspartate 17 is a binding site for Mg(2+). Glutamate 43 lines the K(+) pocket. The L-methionine site is built by glutamate 56 and glutamine 99. A flexible loop region spans residues 99–109 (QSPDINQGVDR). Residues 164–166 (DAK), 230–231 (RF), aspartate 239, 245–246 (RK), alanine 262, and lysine 266 contribute to the ATP site. Residue aspartate 239 coordinates L-methionine. L-methionine is bound at residue lysine 270.

Belongs to the AdoMet synthase family. Homotetramer; dimer of dimers. Mg(2+) is required as a cofactor. The cofactor is K(+).

Its subcellular location is the cytoplasm. It carries out the reaction L-methionine + ATP + H2O = S-adenosyl-L-methionine + phosphate + diphosphate. The protein operates within amino-acid biosynthesis; S-adenosyl-L-methionine biosynthesis; S-adenosyl-L-methionine from L-methionine: step 1/1. Its function is as follows. Catalyzes the formation of S-adenosylmethionine (AdoMet) from methionine and ATP. The overall synthetic reaction is composed of two sequential steps, AdoMet formation and the subsequent tripolyphosphate hydrolysis which occurs prior to release of AdoMet from the enzyme. The polypeptide is S-adenosylmethionine synthase (Pectobacterium carotovorum subsp. carotovorum (strain PC1)).